The chain runs to 159 residues: Large ribosomal subunit protein uL11 (159 aa).

The interval 1 to 26 (MAGTIEVLVPGGKANPGPPLGPELGP) is disordered.

It belongs to the universal ribosomal protein uL11 family. As to quaternary structure, part of the ribosomal stalk of the 50S ribosomal subunit. Interacts with L10 and the large rRNA to form the base of the stalk. L10 forms an elongated spine to which L12 dimers bind in a sequential fashion forming a multimeric L10(L12)X complex.

In terms of biological role, forms part of the ribosomal stalk which helps the ribosome interact with GTP-bound translation factors. This Haloferax volcanii (strain ATCC 29605 / DSM 3757 / JCM 8879 / NBRC 14742 / NCIMB 2012 / VKM B-1768 / DS2) (Halobacterium volcanii) protein is Large ribosomal subunit protein uL11.